The sequence spans 577 residues: Urease subunit alpha (577 aa).

One can recognise a Urease domain in the interval Gly136–Phe577. His141, His143, and Lys224 together coordinate Ni(2+). Lys224 is subject to N6-carboxylysine. Residue His226 coordinates substrate. Positions 253 and 279 each coordinate Ni(2+). His327 serves as the catalytic Proton donor. Asp367 provides a ligand contact to Ni(2+).

It belongs to the metallo-dependent hydrolases superfamily. Urease alpha subunit family. Heterotrimer of UreA (gamma), UreB (beta) and UreC (alpha) subunits. Three heterotrimers associate to form the active enzyme. Requires Ni cation as cofactor. In terms of processing, carboxylation allows a single lysine to coordinate two nickel ions.

Its subcellular location is the cytoplasm. The enzyme catalyses urea + 2 H2O + H(+) = hydrogencarbonate + 2 NH4(+). Its pathway is nitrogen metabolism; urea degradation; CO(2) and NH(3) from urea (urease route): step 1/1. This Mycobacterium ulcerans (strain Agy99) protein is Urease subunit alpha.